The following is a 234-amino-acid chain: Large ribosomal subunit protein uL1 (234 aa).

The protein belongs to the universal ribosomal protein uL1 family. As to quaternary structure, part of the 50S ribosomal subunit.

Its function is as follows. Binds directly to 23S rRNA. The L1 stalk is quite mobile in the ribosome, and is involved in E site tRNA release. In terms of biological role, protein L1 is also a translational repressor protein, it controls the translation of the L11 operon by binding to its mRNA. The sequence is that of Large ribosomal subunit protein uL1 from Helicobacter hepaticus (strain ATCC 51449 / 3B1).